Here is a 903-residue protein sequence, read N- to C-terminus: Alanine--tRNA ligase (903 aa).

Residues His-581, His-585, Cys-693, and His-697 each coordinate Zn(2+).

It belongs to the class-II aminoacyl-tRNA synthetase family. It depends on Zn(2+) as a cofactor.

The protein resides in the cytoplasm. It carries out the reaction tRNA(Ala) + L-alanine + ATP = L-alanyl-tRNA(Ala) + AMP + diphosphate. Catalyzes the attachment of alanine to tRNA(Ala) in a two-step reaction: alanine is first activated by ATP to form Ala-AMP and then transferred to the acceptor end of tRNA(Ala). Also edits incorrectly charged Ser-tRNA(Ala) and Gly-tRNA(Ala) via its editing domain. The protein is Alanine--tRNA ligase of Psychrobacter sp. (strain PRwf-1).